Consider the following 165-residue polypeptide: Choriogonadotropin subunit beta 3 (165 aa).

The N-terminal stretch at M1 to A20 is a signal peptide. Intrachain disulfides connect C29/C77, C43/C92, C46/C130, C54/C108, C58/C110, and C113/C120. N33 and N50 each carry an N-linked (GlcNAc...) asparagine glycan. Positions D131–Q165 are disordered. Residues S141, S147, S152, and S158 are each glycosylated (O-linked (GalNAc...) serine). The span at A143 to L154 shows a compositional bias: pro residues.

This sequence belongs to the glycoprotein hormones subunit beta family. As to quaternary structure, heterodimer of a common alpha chain identical in LH, FSH, TSH and HCG and a unique beta chain distinct in each of the hormones. As to expression, high expression in the placenta throughout pregnancy.

It is found in the secreted. Its function is as follows. Beta subunit of the human chorionic gonadotropin (hCG). hCG is a complex glycoprotein composed of two glycosylated subunits alpha and beta which are non-covalently associated. The alpha subunit is identical to those in the pituitary gonadotropin hormones (LH, FSH and TSH). The beta subunits are distinct in each of the hormones and confer receptor and biological specificity. Has an essential role in pregnancy and maternal adaptation. Stimulates the ovaries to synthesize the steroids that are essential for the maintenance of pregnancy. The sequence is that of Choriogonadotropin subunit beta 3 (CGB3) from Homo sapiens (Human).